The following is a 350-amino-acid chain: Twinfilin-1 (350 aa).

S2 is modified (N-acetylserine). In terms of domain architecture, ADF-H 1 spans 2–139 (SHQTGIQASE…SLHGYKKYLL (138 aa)). Phosphoserine is present on residues S143 and S277. One can recognise an ADF-H 2 domain in the interval 177–313 (GVAFPISQEA…TADFLYEEVH (137 aa)). Y309 is modified (phosphotyrosine). Residues 316–350 (QHAHKQSFAKPKGPSGKRGIRRIIRGPAETEATTE) are disordered. T349 is subject to Phosphothreonine.

This sequence belongs to the actin-binding proteins ADF family. Twinfilin subfamily. In terms of assembly, interacts with G-actin; ADP-actin form and capping protein (CP). May also be able to interact with TWF2 and phosphoinositides, PI(4,5)P2. When bound to PI(4,5)P2, it is down-regulated. Interacts with ACTG1. Post-translationally, phosphorylated on serine and threonine residues.

It is found in the cytoplasm. It localises to the cytoskeleton. Its function is as follows. Actin-binding protein involved in motile and morphological processes. Inhibits actin polymerization, likely by sequestering G-actin. By capping the barbed ends of filaments, it also regulates motility. Seems to play an important role in clathrin-mediated endocytosis and distribution of endocytic organelles. The sequence is that of Twinfilin-1 (TWF1) from Bos taurus (Bovine).